Here is a 100-residue protein sequence, read N- to C-terminus: Small ribosomal subunit protein uS14c (100 aa).

Basic and acidic residues predominate over residues 1–10; it reads MARKGLIERE. The interval 1–29 is disordered; the sequence is MARKGLIEREKKRKKLEQKYHSIRGSSKK.

It belongs to the universal ribosomal protein uS14 family. As to quaternary structure, part of the 30S ribosomal subunit.

Its subcellular location is the plastid. The protein resides in the chloroplast. Its function is as follows. Binds 16S rRNA, required for the assembly of 30S particles. The polypeptide is Small ribosomal subunit protein uS14c (Acorus calamus (Sweet flag)).